A 112-amino-acid chain; its full sequence is MCGDCVEKEYPNRGNTCLENGSFLLNFTGCAVCSKRDFMLITNKSLKEEDGEEIVTYDHLCKNCHHVIARHEYTFSIMDEFQEYTMLCLLCGKAEDTISILPDDPRQMTLLF.

Zn(2+) contacts are provided by Cys2, Cys5, Cys30, Cys33, His59, Cys61, Cys64, His66, His71, Cys88, and Cys91.

This sequence belongs to the Churchill family.

In terms of biological role, transcriptional activator that mediates FGF signaling during neural development. Plays a role in the regulation of cell movement. Does not bind DNA by itself. The polypeptide is Protein Churchill (CHURC1) (Homo sapiens (Human)).